The sequence spans 314 residues: tRNA dimethylallyltransferase (314 aa).

36 to 43 (GPTASGKT) lines the ATP pocket. A substrate-binding site is contributed by 38–43 (TASGKT). Residues 61–64 (DSVQ) form an interaction with substrate tRNA region.

The protein belongs to the IPP transferase family. As to quaternary structure, monomer. Mg(2+) serves as cofactor.

The catalysed reaction is adenosine(37) in tRNA + dimethylallyl diphosphate = N(6)-dimethylallyladenosine(37) in tRNA + diphosphate. Functionally, catalyzes the transfer of a dimethylallyl group onto the adenine at position 37 in tRNAs that read codons beginning with uridine, leading to the formation of N6-(dimethylallyl)adenosine (i(6)A). This Sorangium cellulosum (strain So ce56) (Polyangium cellulosum (strain So ce56)) protein is tRNA dimethylallyltransferase.